A 1755-amino-acid polypeptide reads, in one-letter code: Transposon Ty1-OR Gag-Pol polyprotein (1755 aa).

Composition is skewed to polar residues over residues 1–10, 48–60, and 127–152; these read MESQQLSNYP, TKAN…TPAS, and QSQF…GNTF. Disordered stretches follow at residues 1–93, 126–173, and 352–421; these read MESQ…MMTQ, PQSQ…RPPP, and GSRN…SKST. Over residues 153-165 the composition is skewed to low complexity; that stretch reads TDSSSADSDMTST. Residues 299–401 are RNA-binding; sequence NNGIHINNKV…NSKSKTARAH (103 aa). Positions 402–418 are enriched in low complexity; it reads NVSTSNNSPSTDNDSIS. Residue S416 is modified to Phosphoserine. D461 (for protease activity; shared with dimeric partner) is an active-site residue. Residues 583–640 form an integrase-type zinc finger-like region; it reads NVHTSESTRKYPYPFIHRMLAHANAQTIRYSLKNNTITYFNESDVDWSSAIDYQCPDC. Positions 660–835 constitute an Integrase catalytic domain; that stretch reads NSYEPFQYLH…AGLDISTLLP (176 aa). 2 residues coordinate Mg(2+): D671 and D736. Disordered regions lie at residues 956–1087, 1092–1111, and 1130–1187; these read SKAV…ETEK, RSPS…NIVP, and DLPL…DNET. Residues 960–969 are compositionally biased toward low complexity; it reads SPTDSTPPST. Polar residues predominate over residues 1005-1015; sequence STPQISNIEST. Positions 1038 to 1053 are enriched in basic and acidic residues; it reads ESSHASKSKDFRHSDS. 2 stretches are compositionally biased toward polar residues: residues 1054 to 1082 and 1101 to 1111; these read YSEN…QISD and PENNSSHNIVP. The Bipartite nuclear localization signal signature appears at 1178-1212; that stretch reads KKRSLEDNETEIKVSRDTWNTKNMRSLEPPRSKKR. The Reverse transcriptase Ty1/copia-type domain occupies 1338 to 1476; that stretch reads NNYYITQLDI…DILGLEIKYQ (139 aa). Mg(2+)-binding residues include D1346, D1427, D1428, D1610, E1652, and D1685. One can recognise an RNase H Ty1/copia-type domain in the interval 1610–1752; the sequence is DASYGNQPYY…IKTFKLLTNK (143 aa).

The capsid protein forms a homotrimer, from which the VLPs are assembled. The protease is a homodimer, whose active site consists of two apposed aspartic acid residues. Post-translationally, initially, virus-like particles (VLPs) are composed of the structural unprocessed proteins Gag and Gag-Pol, and also contain the host initiator methionine tRNA (tRNA(i)-Met) which serves as a primer for minus-strand DNA synthesis, and a dimer of genomic Ty RNA. Processing of the polyproteins occurs within the particle and proceeds by an ordered pathway, called maturation. First, the protease (PR) is released by autocatalytic cleavage of the Gag-Pol polyprotein yielding capsid protein p45 and a Pol-p154 precursor protein. This cleavage is a prerequisite for subsequent processing of Pol-p154 at the remaining sites to release the mature structural and catalytic proteins. Maturation takes place prior to the RT reaction and is required to produce transposition-competent VLPs.

Its subcellular location is the cytoplasm. The protein localises to the nucleus. The catalysed reaction is DNA(n) + a 2'-deoxyribonucleoside 5'-triphosphate = DNA(n+1) + diphosphate. The enzyme catalyses Endonucleolytic cleavage to 5'-phosphomonoester.. Functionally, capsid protein (CA) is the structural component of the virus-like particle (VLP), forming the shell that encapsulates the retrotransposons dimeric RNA genome. The particles are assembled from trimer-clustered units and there are holes in the capsid shells that allow for the diffusion of macromolecules. CA also has nucleocapsid-like chaperone activity, promoting primer tRNA(i)-Met annealing to the multipartite primer-binding site (PBS), dimerization of Ty1 RNA and initiation of reverse transcription. The aspartyl protease (PR) mediates the proteolytic cleavages of the Gag and Gag-Pol polyproteins after assembly of the VLP. Its function is as follows. Reverse transcriptase/ribonuclease H (RT) is a multifunctional enzyme that catalyzes the conversion of the retro-elements RNA genome into dsDNA within the VLP. The enzyme displays a DNA polymerase activity that can copy either DNA or RNA templates, and a ribonuclease H (RNase H) activity that cleaves the RNA strand of RNA-DNA heteroduplexes during plus-strand synthesis and hydrolyzes RNA primers. The conversion leads to a linear dsDNA copy of the retrotransposon that includes long terminal repeats (LTRs) at both ends. In terms of biological role, integrase (IN) targets the VLP to the nucleus, where a subparticle preintegration complex (PIC) containing at least integrase and the newly synthesized dsDNA copy of the retrotransposon must transit the nuclear membrane. Once in the nucleus, integrase performs the integration of the dsDNA into the host genome. The protein is Transposon Ty1-OR Gag-Pol polyprotein (TY1B-OR) of Saccharomyces cerevisiae (strain ATCC 204508 / S288c) (Baker's yeast).